A 592-amino-acid chain; its full sequence is Potassium-transporting ATPase potassium-binding subunit (592 aa).

The next 10 membrane-spanning stretches (helical) occupy residues 7 to 27, 60 to 80, 132 to 152, 175 to 195, 279 to 299, 310 to 330, 409 to 429, 449 to 469, 513 to 533, and 556 to 576; these read ILLGIFLVVLLLTVKPLGTYI, LKYACAILLFNVLGVLAVYAL, ALAVQNFFSAATGIVVVIALI, LHVLLPISIIYAVFLTGQGVI, LSNFIQMLSIFLIPAALCFTF, WAVLAAMTLMFVALAYTAMHF, GLYGMLVFAIMAVFIAGLMIG, IAILVTPLLVLVGTAIAVMLA, VMLGIAMWFGRFGVIVPVLAI, and LFVTLLIGTVLLVGLLNYVPA.

The protein belongs to the KdpA family. As to quaternary structure, the system is composed of three essential subunits: KdpA, KdpB and KdpC.

It localises to the cell inner membrane. In terms of biological role, part of the high-affinity ATP-driven potassium transport (or Kdp) system, which catalyzes the hydrolysis of ATP coupled with the electrogenic transport of potassium into the cytoplasm. This subunit binds the periplasmic potassium ions and delivers the ions to the membrane domain of KdpB through an intramembrane tunnel. The chain is Potassium-transporting ATPase potassium-binding subunit from Dechloromonas aromatica (strain RCB).